We begin with the raw amino-acid sequence, 524 residues long: Maturase K (524 aa).

It belongs to the intron maturase 2 family. MatK subfamily.

The protein localises to the plastid. It is found in the chloroplast. In terms of biological role, usually encoded in the trnK tRNA gene intron. Probably assists in splicing its own and other chloroplast group II introns. In Welwitschia mirabilis (Tree tumbo), this protein is Maturase K.